Reading from the N-terminus, the 147-residue chain is MKVILKQDVKKLGTAGEVKEVSDGYARNFLIPRGIAVEASKGHMKDLELQRKQEEERQQKLKEEAEELKQKLDNEKVVIYQKTGDEGKLFGSVTNKDVAEELKSKGYTVEKKKIEMEPIKSLGTHKVHVKLHPEVTVDIDVQVSEKK.

Belongs to the bacterial ribosomal protein bL9 family.

Its function is as follows. Binds to the 23S rRNA. This is Large ribosomal subunit protein bL9 from Natranaerobius thermophilus (strain ATCC BAA-1301 / DSM 18059 / JW/NM-WN-LF).